Reading from the N-terminus, the 1216-residue chain is MGKKQKNKSEDSTKDDTDLGALAAEIEGAGAAKEQEPQKSKGKKKKEKKKQDFDENDILRELEELSLEAQGIRADRDAAAVKPTENNEEESASKQDKKKKGQKGKKTSFDENDSEELEDKDSKSKKTARPNSEAPLSGSEDADDSNKLSKKGKKAQKSTKKRDGSEEDEDNSKRSKERSRVNSSGESGGESDEFLQSRKGQKKNQKNKSVPTVDSGNEDDDSSFKIKTVAQKKAEKKEREKKKRDEEKAKLRKMKEKEELEKGKKEQSKQREPQKRPEEEVLTLRGTPDTGAASEEKGDTAAALEDDNEGDKKKKDKKKKKTEKDEKEKEKKKGPSKSTVKAIQEALAKLKEEEERQKREEEERIKRLEELEAKRKEEERLEQEKRERKKQKEKERKERLKKEGKLLTKSQREARARAEVTLRHLQAQGVEVPSKDSLPKKRPVYEDKKKKKTPQQLESKEVSETLEISAPVEAVDQGGPEKEETPPSVEPEEEEDTEDAGLDDWEAMASDEEREKEGNMIHIEVEENPEEEEEEEEEEEEEESEDEEEEGDSEGSDGDEEDCKLSDEKDSGKAGDTKPSKDASSDSEYDSDDDRTKEERAYDKAKRRIEKRRLEHGKNVNTEKLRAPIICVLGHVDTGKTKILDKLRHTHVQDGEAGGITQQIGATNVPLEAINEQTKMIKNFDRENVRIPGMLIIDTPGHESFSNLRNRGSSLCDIAILVVDIMHGLEPQTIESINILKSKKCPFIVALNKIDRLYDWKKSPDSDVAVTLKKQKKNTKDEFEERAKAIIVEFAQQGLNAALFYENKDPRTFVSLVPTSAHTGDGMGSLIYLLVELTQTMLSKRLAHCEELRAQVMEVKALPGMGTTIDVILINGRLKEGDTIIVPGVEGPIVTQIRGLLLPPPMKELRVKNQYEKHKEVEAAQGVKILGKDLEKTLAGLPLLVAYKDDEIPVLKDELIHELKQTLNAIKLEEKGVYVQASTLGSLEALLEFLKTSEVPYAGINIGPVHKKDVMKASVMLEHDPQYAVILAFDVRIERDAQEMADSLGVRIFSAEIIYHLFDAFTKYRQDYKKQKQEEFKHIAVFPCKMKILPQYIFNSRDPIVIGVTVEAGQVKQGTPMCVPSKNFVDIGIVTSIEINHKQVDVAKKGQEVCVKIEPIPGESPKMFGRHFEATDILVSKISRQSIDALKDWFRDEMQKSDWQLIVELKKVFEII.

The interval 1–604 (MGKKQKNKSE…RTKEERAYDK (604 aa)) is disordered. Basic and acidic residues predominate over residues 7–17 (NKSEDSTKDDT). Positions 19–32 (LGALAAEIEGAGAA) are enriched in low complexity. The segment covering 49–63 (KKQDFDENDILRELE) has biased composition (basic and acidic residues). Phosphoserine is present on Ser-66. Residues 96-106 (DKKKKGQKGKK) show a composition bias toward basic residues. Thr-107 is modified (phosphothreonine). Ser-108, Ser-114, Ser-137, Ser-139, and Ser-145 each carry phosphoserine. Positions 110–119 (DENDSEELED) are enriched in acidic residues. Residues 148–160 (LSKKGKKAQKSTK) show a composition bias toward basic residues. Phosphoserine occurs at positions 165, 172, 183, 184, 187, 191, 209, 215, and 223. The segment covering 171 to 180 (NSKRSKERSR) has biased composition (basic and acidic residues). The span at 232 to 279 (KKAEKKEREKKKRDEEKAKLRKMKEKEELEKGKKEQSKQREPQKRPEE) shows a compositional bias: basic and acidic residues. Thr-300 carries the post-translational modification Phosphothreonine. 3 stretches are compositionally biased toward basic and acidic residues: residues 322 to 333 (TEKDEKEKEKKK), 348 to 422 (AKLK…EVTL), and 433 to 448 (PSKD…YEDK). Position 437 is a phosphoserine (Ser-437). Positions 490–510 (EPEEEEDTEDAGLDDWEAMAS) are enriched in acidic residues. At Thr-497 the chain carries Phosphothreonine. Positions 511-525 (DEEREKEGNMIHIEV) are enriched in basic and acidic residues. Positions 526-562 (EENPEEEEEEEEEEEEEESEDEEEEGDSEGSDGDEED) are enriched in acidic residues. 7 positions are modified to phosphoserine: Ser-544, Ser-553, Ser-556, Ser-584, Ser-585, Ser-587, and Ser-591. Residues 563–584 (CKLSDEKDSGKAGDTKPSKDAS) show a composition bias toward basic and acidic residues. Residues 594–604 (DRTKEERAYDK) show a composition bias toward basic and acidic residues. Residues 625 to 842 (LRAPIICVLG…LLVELTQTML (218 aa)) form the tr-type G domain. Residues 634–641 (GHVDTGKT) are G1. Residues 636-642 (VDTGKTK) and 659-661 (GIT) each bind GTP. Positions 659–663 (GITQQ) are G2. The tract at residues 698–701 (DTPG) is G3. Residue His-702 is part of the active site. Residues 752 to 753 (NK), 755 to 756 (DR), and 821 to 822 (AH) each bind GTP. The interval 752–755 (NKID) is G4. A G5 region spans residues 820–822 (SAH). Position 1164 is a phosphoserine (Ser-1164).

This sequence belongs to the TRAFAC class translation factor GTPase superfamily. Classic translation factor GTPase family. IF-2 subfamily. Interacts through its C-terminal domain (CTD) with the CTD of eIF1A (EIF1AX) or with the CTD of EIF5 (mutually exclusive) through a common binding site. Interacts with eIF1A (EIF1AX) from the location of the start codon by the 43S complex until the formation of the 80S complex. Interacts with ANXA5 in a calcium and phospholipid-dependent manner. The cofactor is a monovalent cation.

The protein localises to the cytoplasm. The catalysed reaction is GTP + H2O = GDP + phosphate + H(+). Functionally, plays a role in translation initiation. Ribosome-dependent GTPase that promotes the joining of the 60S ribosomal subunit to the pre-initiation complex to form the 80S initiation complex with the initiator methionine-tRNA in the P-site base paired to the start codon. Together with eIF1A (EIF1AX), actively orients the initiator methionine-tRNA in a conformation that allows 60S ribosomal subunit joining to form the 80S initiation complex. Is released after formation of the 80S initiation complex. Its GTPase activity is not essential for ribosomal subunits joining, but GTP hydrolysis is needed for eIF1A (EIF1AX) ejection quickly followed by EIF5B release to form elongation-competent ribosomes. In contrast to its procaryotic homolog, does not promote recruitment of Met-rRNA to the small ribosomal subunit. The protein is Eukaryotic translation initiation factor 5B (Eif5b) of Mus musculus (Mouse).